We begin with the raw amino-acid sequence, 216 residues long: Probable GTP-binding protein EngB (216 aa).

The 175-residue stretch at 27 to 201 (EGIEVAFAGR…REKLDTWFSE (175 aa)) folds into the EngB-type G domain. Residues 35-42 (GRSNAGKS), 62-66 (GRTQL), 80-83 (DLPG), 147-150 (TKAD), and 180-182 (FSS) contribute to the GTP site. 2 residues coordinate Mg(2+): Ser-42 and Thr-64.

Belongs to the TRAFAC class TrmE-Era-EngA-EngB-Septin-like GTPase superfamily. EngB GTPase family. Mg(2+) is required as a cofactor.

Functionally, necessary for normal cell division and for the maintenance of normal septation. In Yersinia pestis bv. Antiqua (strain Angola), this protein is Probable GTP-binding protein EngB.